Here is a 192-residue protein sequence, read N- to C-terminus: Mediator of RNA polymerase II transcription subunit 29 (192 aa).

Residues 32–51 form a disordered region; that stretch reads MQQQSPQQMQPAPVPQQTQQ.

Belongs to the Mediator complex subunit 29 family. In terms of assembly, component of the Mediator complex.

It is found in the nucleus. Functionally, component of the Mediator complex, a coactivator involved in the regulated transcription of nearly all RNA polymerase II-dependent genes. Mediator functions as a bridge to convey information from gene-specific regulatory proteins to the basal RNA polymerase II transcription machinery. Mediator is recruited to promoters by direct interactions with regulatory proteins and serves as a scaffold for the assembly of a functional preinitiation complex with RNA polymerase II and the general transcription factors. This chain is Mediator of RNA polymerase II transcription subunit 29 (ix), found in Bombyx mori (Silk moth).